A 122-amino-acid polypeptide reads, in one-letter code: Large ribosomal subunit protein uL14 (122 aa).

This sequence belongs to the universal ribosomal protein uL14 family. In terms of assembly, part of the 50S ribosomal subunit. Forms a cluster with proteins L3 and L19. In the 70S ribosome, L14 and L19 interact and together make contacts with the 16S rRNA in bridges B5 and B8.

Binds to 23S rRNA. Forms part of two intersubunit bridges in the 70S ribosome. This chain is Large ribosomal subunit protein uL14, found in Bifidobacterium animalis subsp. lactis (strain AD011).